Here is a 533-residue protein sequence, read N- to C-terminus: Thromboxane-A synthase (533 aa).

Residues 1-10 are Cytoplasmic-facing; the sequence is MEVLGLLKFE. Residues 11 to 31 traverse the membrane as a helical segment; that stretch reads VSGTIVTVTLLVALLALLKWY. Topologically, residues 32 to 75 are lumenal; it reads SMSAFSRLEKLGIRHPKPSPFVGNLMFFRQGFWESQLELRERYG. Residues 76 to 96 form a helical membrane-spanning segment; the sequence is PLCGYYLGRRMHVVISEPDMI. Topologically, residues 97–223 are cytoplasmic; sequence KQVLVENFSN…RRASTFCIPR (127 aa). The chain crosses the membrane as a helical span at residues 224–244; sequence PLLVLILSFPSIMVPLARILP. Residues 245-335 are Lumenal-facing; sequence NKNRDELNGF…FTVDEIVGQA (91 aa). Residues 336–356 form a helical membrane-spanning segment; sequence FLFLIAGHEVITNTLSFITYL. Residues 357 to 533 lie on the Cytoplasmic side of the membrane; it reads LATHPDCQER…NGVYIKIVSR (177 aa). C479 is a binding site for heme.

The protein belongs to the cytochrome P450 family. Monomer. Heme serves as cofactor. Expressed primarily in lung, kidney, and spleen.

It localises to the endoplasmic reticulum membrane. The enzyme catalyses prostaglandin H2 = thromboxane A2. The catalysed reaction is prostaglandin H2 = (12S)-hydroxy-(5Z,8E,10E)-heptadecatrienoate + malonaldehyde. It catalyses the reaction a hydroperoxyeicosatetraenoate = an oxoeicosatetraenoate + H2O. It carries out the reaction (15S)-hydroperoxy-(5Z,8Z,11Z,13E)-eicosatetraenoate = 15-oxo-(5Z,8Z,11Z,13E)-eicosatetraenoate + H2O. The enzyme catalyses (15S)-hydroperoxy-(5Z,8Z,11Z,13E)-eicosatetraenoate + AH2 = (15S)-hydroxy-(5Z,8Z,11Z,13E)-eicosatetraenoate + A + H2O. In terms of biological role, catalyzes the conversion of prostaglandin H2 (PGH2) to thromboxane A2 (TXA2), a potent inducer of blood vessel constriction and platelet aggregation. Also cleaves PGH2 to 12-hydroxy-heptadecatrienoicacid (12-HHT) and malondialdehyde, which is known to act as a mediator of DNA damage. 12-HHT and malondialdehyde are formed stoichiometrically in the same amounts as TXA2. Additionally, displays dehydratase activity, toward (15S)-hydroperoxy-(5Z,8Z,11Z,13E)-eicosatetraenoate (15(S)-HPETE) producing 15-KETE and 15-HETE. This Mus musculus (Mouse) protein is Thromboxane-A synthase (Tbxas1).